The chain runs to 405 residues: Transposase from transposon Tn1545 (405 aa).

The 85-residue stretch at G79 to I163 folds into the Core-binding (CB) domain. The Tyr recombinase domain occupies V186–K392. Active-site residues include R225, K264, H343, R346, and H369. Residue Y379 is the O-(3'-phospho-DNA)-tyrosine intermediate of the active site.

The protein belongs to the 'phage' integrase family.

The sequence is that of Transposase from transposon Tn1545 (int) from Streptococcus agalactiae serotype V (strain ATCC BAA-611 / 2603 V/R).